A 312-amino-acid chain; its full sequence is Putative B3 domain-containing protein Os10g0537100 (312 aa).

Residues 35–153 constitute a DNA-binding region (TF-B3); the sequence is FEKVVTPSDV…RLFIDFRRRR (119 aa). Disordered stretches follow at residues 161–182 and 286–312; these read FPPT…HPPL and LLQL…DLGL. Positions 170 to 180 are enriched in basic residues; it reads HSHHHHQRHHP. Residues 286–301 show a composition bias toward low complexity; the sequence is LLQLPSPSSSTSSSTA.

The protein localises to the nucleus. This Oryza sativa subsp. japonica (Rice) protein is Putative B3 domain-containing protein Os10g0537100.